A 387-amino-acid chain; its full sequence is 3-ketoacyl-CoA thiolase (387 aa).

Cys91 functions as the Acyl-thioester intermediate in the catalytic mechanism. Catalysis depends on proton acceptor residues His343 and Cys373.

It belongs to the thiolase-like superfamily. Thiolase family. As to quaternary structure, heterotetramer of two alpha chains (FadB) and two beta chains (FadA).

It is found in the cytoplasm. The catalysed reaction is an acyl-CoA + acetyl-CoA = a 3-oxoacyl-CoA + CoA. It participates in lipid metabolism; fatty acid beta-oxidation. In terms of biological role, catalyzes the final step of fatty acid oxidation in which acetyl-CoA is released and the CoA ester of a fatty acid two carbons shorter is formed. The polypeptide is 3-ketoacyl-CoA thiolase (Vibrio cholerae serotype O1 (strain ATCC 39315 / El Tor Inaba N16961)).